The primary structure comprises 298 residues: Ethanolamine ammonia-lyase small subunit (298 aa).

Residues Val210, Glu231, and Cys261 each coordinate adenosylcob(III)alamin.

Belongs to the EutC family. In terms of assembly, the basic unit is a heterodimer which dimerizes to form tetramers. The heterotetramers trimerize; 6 large subunits form a core ring with 6 small subunits projecting outwards. The cofactor is adenosylcob(III)alamin.

The protein resides in the bacterial microcompartment. The enzyme catalyses ethanolamine = acetaldehyde + NH4(+). It functions in the pathway amine and polyamine degradation; ethanolamine degradation. Functionally, catalyzes the deamination of various vicinal amino-alcohols to oxo compounds. Allows this organism to utilize ethanolamine as the sole source of nitrogen and carbon in the presence of external vitamin B12. The sequence is that of Ethanolamine ammonia-lyase small subunit from Salmonella dublin (strain CT_02021853).